Here is a 260-residue protein sequence, read N- to C-terminus: Thiazole synthase (260 aa).

Lys-96 acts as the Schiff-base intermediate with DXP in catalysis. 1-deoxy-D-xylulose 5-phosphate is bound by residues Gly-157, 184-185 (AG), and 206-207 (NT).

This sequence belongs to the ThiG family. Homotetramer. Forms heterodimers with either ThiH or ThiS.

The protein localises to the cytoplasm. It catalyses the reaction [ThiS sulfur-carrier protein]-C-terminal-Gly-aminoethanethioate + 2-iminoacetate + 1-deoxy-D-xylulose 5-phosphate = [ThiS sulfur-carrier protein]-C-terminal Gly-Gly + 2-[(2R,5Z)-2-carboxy-4-methylthiazol-5(2H)-ylidene]ethyl phosphate + 2 H2O + H(+). The protein operates within cofactor biosynthesis; thiamine diphosphate biosynthesis. In terms of biological role, catalyzes the rearrangement of 1-deoxy-D-xylulose 5-phosphate (DXP) to produce the thiazole phosphate moiety of thiamine. Sulfur is provided by the thiocarboxylate moiety of the carrier protein ThiS. In vitro, sulfur can be provided by H(2)S. In Rhodopseudomonas palustris (strain BisA53), this protein is Thiazole synthase.